The primary structure comprises 251 residues: tRNA-cytidine(32) 2-sulfurtransferase 2 (251 aa).

A PP-loop motif motif is present at residues 33 to 38; it reads SGGKDS. 3 residues coordinate [4Fe-4S] cluster: Cys108, Cys111, and Cys199.

Belongs to the TtcA family. In terms of assembly, homodimer. The cofactor is Mg(2+). [4Fe-4S] cluster serves as cofactor.

The protein resides in the cytoplasm. It catalyses the reaction cytidine(32) in tRNA + S-sulfanyl-L-cysteinyl-[cysteine desulfurase] + AH2 + ATP = 2-thiocytidine(32) in tRNA + L-cysteinyl-[cysteine desulfurase] + A + AMP + diphosphate + H(+). Its pathway is tRNA modification. Catalyzes the ATP-dependent 2-thiolation of cytidine in position 32 of tRNA, to form 2-thiocytidine (s(2)C32). The sulfur atoms are provided by the cysteine/cysteine desulfurase (IscS) system. The polypeptide is tRNA-cytidine(32) 2-sulfurtransferase 2 (Francisella tularensis subsp. tularensis (strain WY96-3418)).